Here is a 57-residue protein sequence, read N- to C-terminus: UPF0391 membrane protein RPE_2138 (57 aa).

A run of 2 helical transmembrane segments spans residues 4 to 24 and 30 to 50; these read WVVT…GGIA and IAKI…VIGL.

The protein belongs to the UPF0391 family.

The protein localises to the cell membrane. This is UPF0391 membrane protein RPE_2138 from Rhodopseudomonas palustris (strain BisA53).